Here is a 787-residue protein sequence, read N- to C-terminus: Putative pentatricopeptide repeat-containing protein At1g69350, mitochondrial (787 aa).

Residues 1–16 constitute a mitochondrion transit peptide; that stretch reads MTQYMPLFRSCSSLRL. 19 PPR repeats span residues 33–63, 64–98, 99–134, 135–165, 166–200, 201–235, 236–266, 267–301, 302–336, 338–368, 369–403, 404–434, 438–468, 469–503, 504–534, 538–568, 569–603, 604–638, and 639–669; these read DPLP…FPYP, DSFM…TTQI, SKFV…GVDD, DAVI…MPVR, DLVA…GVEP, DAVT…MFDL, DETL…IAKK, NAVS…GIEP, NLVT…ELDP, YESL…VSDR, NIVA…RIKP, DAFT…VIRT, DEFV…IKHR, SVVT…YLEM, NEVT…LIIS, DLFT…MSSR, SIVS…GTKP, NEVV…GVSP, and NSEH…MPFL. A type E motif region spans residues 674–749; the sequence is VWGSLVNGCR…VPGYSAIEID (76 aa). The interval 750–780 is type E(+) motif; it reads QKVFRFGAGEENRIQTDEIYRFLGNLQNLTN.

It belongs to the PPR family. PCMP-E subfamily.

Its subcellular location is the mitochondrion. The sequence is that of Putative pentatricopeptide repeat-containing protein At1g69350, mitochondrial (PCMP-E66) from Arabidopsis thaliana (Mouse-ear cress).